The sequence spans 357 residues: 3-isopropylmalate dehydrogenase (357 aa).

76–89 contributes to the NAD(+) binding site; the sequence is GPQWDTIDPALRPE. The substrate site is built by Arg96, Arg106, Arg134, and Asp224. Asp224, Asp248, and Asp252 together coordinate Mg(2+). Residue 282–294 participates in NAD(+) binding; sequence GSAPDIAGQGIAN.

The protein belongs to the isocitrate and isopropylmalate dehydrogenases family. LeuB type 1 subfamily. Homodimer. Requires Mg(2+) as cofactor. The cofactor is Mn(2+).

The protein localises to the cytoplasm. The enzyme catalyses (2R,3S)-3-isopropylmalate + NAD(+) = 4-methyl-2-oxopentanoate + CO2 + NADH. It functions in the pathway amino-acid biosynthesis; L-leucine biosynthesis; L-leucine from 3-methyl-2-oxobutanoate: step 3/4. Catalyzes the oxidation of 3-carboxy-2-hydroxy-4-methylpentanoate (3-isopropylmalate) to 3-carboxy-4-methyl-2-oxopentanoate. The product decarboxylates to 4-methyl-2 oxopentanoate. This is 3-isopropylmalate dehydrogenase from Xanthomonas campestris pv. campestris (strain 8004).